The primary structure comprises 1736 residues: Collagen alpha-2(XI) chain (1736 aa).

Residues M1 to A27 form the signal peptide. A Laminin G-like domain is found at D57–C228. Residues Q215 to R486 form a nonhelical region region. Disordered stretches follow at residues E229–P465 and L485–G1539. The segment covering P258–S270 has biased composition (polar residues). The span at A363–R376 shows a compositional bias: low complexity. Collagen-like domains lie at G399 to G447, G487 to A545, and R546 to E587. The span at P400 to P413 shows a compositional bias: pro residues. Residues G487 to V1500 form a triple-helical region region. A compositionally biased stretch (low complexity) spans D515–K533. Residues K615 to P624 are compositionally biased toward pro residues. Residues Q650–Q663 are compositionally biased toward low complexity. A compositionally biased stretch (basic and acidic residues) spans R765 to K774. Residues P842 to K861 show a composition bias toward low complexity. Gly residues predominate over residues G994 to G1003. Positions I1029 to P1040 are enriched in pro residues. Collagen-like domains follow at residues G1072 to E1127 and P1128 to D1172. Low complexity predominate over residues P1115–P1133. The span at M1176–P1187 shows a compositional bias: pro residues. Residues E1217–K1230 are compositionally biased toward low complexity. Composition is skewed to basic and acidic residues over residues P1232–E1241 and D1287–D1296. Composition is skewed to low complexity over residues P1341–P1364 and Q1376–A1386. A compositionally biased stretch (pro residues) spans P1388–L1397. A compositionally biased stretch (low complexity) spans P1413–P1422. In terms of domain architecture, Collagen-like 6 spans G1444 to E1499. Positions P1457–A1467 are enriched in pro residues. A compositionally biased stretch (low complexity) spans P1469–P1481. Positions I1501–G1736 are cleaved as a propeptide — C-terminal propeptide. Positions E1541 to M1735 constitute a Fibrillar collagen NC1 domain. C1571 and C1603 are joined by a disulfide. Ca(2+) contacts are provided by D1589, N1591, Q1592, C1594, and D1597. N-linked (GlcNAc...) asparagine glycosylation is found at N1604 and N1650. Disulfide bonds link C1612–C1733 and C1655–C1689.

This sequence belongs to the fibrillar collagen family. Trimers composed of three different chains: alpha 1(XI), alpha 2(XI), and alpha 3(XI). Alpha 3(XI) is a post-translational modification of alpha 1(II). Alpha 1(V) can also be found instead of alpha 3(XI)=1(II). Prolines at the third position of the tripeptide repeating unit (G-X-Y) are hydroxylated in some or all of the chains.

It is found in the secreted. It localises to the extracellular space. Its subcellular location is the extracellular matrix. May play an important role in fibrillogenesis by controlling lateral growth of collagen II fibrils. In Bos taurus (Bovine), this protein is Collagen alpha-2(XI) chain (COL11A2).